The chain runs to 71 residues: Small ribosomal subunit protein eS31 (71 aa).

Residues C35, C38, C53, and C56 each coordinate Zn(2+). The C4-type zinc-finger motif lies at 35–56 (CPKCGAGVFMAEHLNRYACGKC).

This sequence belongs to the eukaryotic ribosomal protein eS31 family. In terms of assembly, part of the 30S ribosomal subunit. Zn(2+) serves as cofactor.

The chain is Small ribosomal subunit protein eS31 from Methanococcus vannielii (strain ATCC 35089 / DSM 1224 / JCM 13029 / OCM 148 / SB).